The sequence spans 373 residues: Ca(2+)/H(+) antiporter (373 aa).

Helical transmembrane passes span 6-26 (TIFFGLLLFIPISLLGHWLHW), 29-49 (VSIFLTASLAIIPLAAFMGEA), 61-81 (LGGLLNATFGNATELILAFIA), 94-114 (ITGSIISNLLLVMGFAMLLGG), 134-154 (MNLAVIAILLPTAVEHTSNGI), 162-182 (LSVAVAIVLIIVYGLTLLFSM), 220-240 (FWLGILLVVTITVAIESELLV), 249-269 (SLGLTALFTGVILLPVIGNAA), 291-311 (VGSTLQIALFVAPVLVIAGWI), 318-338 (LDFNPFELVAVAVSVLIANSI), and 349-369 (GSLLLATYIVIGLAFFFHPVV).

It belongs to the Ca(2+):cation antiporter (CaCA) (TC 2.A.19) family. Cation/proton exchanger (CAX) subfamily.

The protein localises to the cell inner membrane. Ca(+)/H(+) antiporter that extrudes calcium in exchange for external protons. Plays an important role in salt tolerance. Does not transport sodium or lithium. The sequence is that of Ca(2+)/H(+) antiporter from Aphanothece halophytica.